A 553-amino-acid chain; its full sequence is Glutamyl-tRNA(Gln) amidotransferase subunit B, mitochondrial (553 aa).

The N-terminal 18 residues, 1 to 18 (MAASTSGYSGVLFRLRKY), are a transit peptide targeting the mitochondrion.

This sequence belongs to the GatB/GatE family. GatB subfamily. In terms of assembly, subunit of the heterotrimeric GatCAB amidotransferase (AdT) complex, composed of A (qrsl1), B (gatb) and C (gatc) subunits.

It is found in the mitochondrion. It carries out the reaction L-glutamyl-tRNA(Gln) + L-glutamine + ATP + H2O = L-glutaminyl-tRNA(Gln) + L-glutamate + ADP + phosphate + H(+). Functionally, allows the formation of correctly charged Gln-tRNA(Gln) through the transamidation of misacylated Glu-tRNA(Gln) in the mitochondria. The reaction takes place in the presence of glutamine and ATP through an activated gamma-phospho-Glu-tRNA(Gln). This Danio rerio (Zebrafish) protein is Glutamyl-tRNA(Gln) amidotransferase subunit B, mitochondrial.